Here is a 2620-residue protein sequence, read N- to C-terminus: Ankyrin repeat and KH domain-containing protein mask-1 (2620 aa).

ANK repeat units lie at residues Ser-254–Val-283, Asn-288–Asp-318, Glu-361–Pro-390, Glu-402–Leu-431, Ile-437–Glu-466, Lys-470–Val-502, Thr-507–Ala-536, Lys-538–Gln-566, Gln-568–Phe-597, Asp-600–Phe-629, Asn-634–Leu-663, and Asp-667–Met-697. 3 disordered regions span residues Lys-699 to Asp-726, His-994 to Ala-1032, and Ser-1192 to Lys-1229. Residues Thr-1012 to Gln-1029 are compositionally biased toward polar residues. The span at Ser-1192–Gln-1206 shows a compositional bias: low complexity. A compositionally biased stretch (basic and acidic residues) spans Thr-1210–Lys-1221. 10 ANK repeats span residues Thr-1234–His-1263, Lys-1267–Ala-1296, Thr-1301–His-1330, Ser-1334–Ser-1363, Leu-1369–Ala-1398, Asn-1403–His-1432, Thr-1436–Ala-1465, Thr-1471–Val-1500, Lys-1504–Met-1533, and Arg-1537–Asn-1566. The stretch at Ala-1596–Glu-1648 forms a coiled coil. Disordered stretches follow at residues Gln-1621 to Pro-1720 and Lys-1759 to Thr-1804. Basic and acidic residues predominate over residues Lys-1636 to Ala-1647. Residues Glu-1648 to Pro-1661 are compositionally biased toward acidic residues. Composition is skewed to low complexity over residues Pro-1665 to Glu-1681 and Lys-1769 to Ser-1791. Residues Glu-1807–Ile-1873 form the KH domain. Over residues Ala-1899–Asp-1913 the composition is skewed to polar residues. Disordered regions lie at residues Ala-1899–Trp-1962, Leu-1976–Glu-2010, Ser-2067–Asn-2143, Asn-2267–Gly-2294, Ser-2307–Gln-2343, Gln-2372–Met-2391, Gln-2429–Tyr-2448, and Gln-2496–Trp-2620. The segment covering Ala-1917–Ser-1946 has biased composition (low complexity). Positions Ile-1982–Pro-1993 are enriched in polar residues. Composition is skewed to low complexity over residues Ser-1994–Asp-2006, Ser-2067–Gln-2078, and Ser-2100–Ser-2118. Polar residues-rich tracts occupy residues Asn-2267–Pro-2286 and Arg-2325–Ile-2339. The segment covering Ser-2505–Arg-2528 has biased composition (polar residues). The span at Arg-2535 to Pro-2547 shows a compositional bias: pro residues. Residues Ser-2552–Thr-2565 show a composition bias toward polar residues. 2 stretches are compositionally biased toward low complexity: residues Ser-2566 to Gln-2588 and Gln-2597 to Trp-2620.

It belongs to the mask family.

It localises to the cytoplasm. The sequence is that of Ankyrin repeat and KH domain-containing protein mask-1 from Caenorhabditis elegans.